Here is a 101-residue protein sequence, read N- to C-terminus: NAD(P)H-quinone oxidoreductase subunit 4L, chloroplastic (101 aa).

The next 3 membrane-spanning stretches (helical) occupy residues 2–22, 32–52, and 61–81; these read ILEH…YGLI, MCLE…SDFF, and IFSI…LAIV.

This sequence belongs to the complex I subunit 4L family. As to quaternary structure, NDH is composed of at least 16 different subunits, 5 of which are encoded in the nucleus.

It localises to the plastid. Its subcellular location is the chloroplast thylakoid membrane. The catalysed reaction is a plastoquinone + NADH + (n+1) H(+)(in) = a plastoquinol + NAD(+) + n H(+)(out). It catalyses the reaction a plastoquinone + NADPH + (n+1) H(+)(in) = a plastoquinol + NADP(+) + n H(+)(out). Its function is as follows. NDH shuttles electrons from NAD(P)H:plastoquinone, via FMN and iron-sulfur (Fe-S) centers, to quinones in the photosynthetic chain and possibly in a chloroplast respiratory chain. The immediate electron acceptor for the enzyme in this species is believed to be plastoquinone. Couples the redox reaction to proton translocation, and thus conserves the redox energy in a proton gradient. This is NAD(P)H-quinone oxidoreductase subunit 4L, chloroplastic from Eucalyptus globulus subsp. globulus (Tasmanian blue gum).